Consider the following 453-residue polypeptide: Bifunctional protein GlmU (453 aa).

The tract at residues 1-227 is pyrophosphorylase; it reads MNKLSVVILA…LMEVEGVNNR (227 aa). UDP-N-acetyl-alpha-D-glucosamine-binding positions include 9-12, lysine 23, glutamine 74, 79-80, 101-103, glycine 138, glutamate 152, asparagine 167, and asparagine 225; these read LAAG, GT, and YGD. Aspartate 103 provides a ligand contact to Mg(2+). Position 225 (asparagine 225) interacts with Mg(2+). A linker region spans residues 228-248; the sequence is LQLANLERHYQRKQVEKLLLA. The interval 249 to 453 is N-acetyltransferase; sequence GVTFADPARF…ISNWQRPKRK (205 aa). UDP-N-acetyl-alpha-D-glucosamine contacts are provided by arginine 331 and lysine 349. The Proton acceptor role is filled by histidine 361. The UDP-N-acetyl-alpha-D-glucosamine site is built by tyrosine 364 and asparagine 375. Residues alanine 378, 384–385, serine 403, alanine 421, and arginine 438 each bind acetyl-CoA; that span reads NY.

This sequence in the N-terminal section; belongs to the N-acetylglucosamine-1-phosphate uridyltransferase family. In the C-terminal section; belongs to the transferase hexapeptide repeat family. As to quaternary structure, homotrimer. Requires Mg(2+) as cofactor.

The protein resides in the cytoplasm. The enzyme catalyses alpha-D-glucosamine 1-phosphate + acetyl-CoA = N-acetyl-alpha-D-glucosamine 1-phosphate + CoA + H(+). It catalyses the reaction N-acetyl-alpha-D-glucosamine 1-phosphate + UTP + H(+) = UDP-N-acetyl-alpha-D-glucosamine + diphosphate. Its pathway is nucleotide-sugar biosynthesis; UDP-N-acetyl-alpha-D-glucosamine biosynthesis; N-acetyl-alpha-D-glucosamine 1-phosphate from alpha-D-glucosamine 6-phosphate (route II): step 2/2. It participates in nucleotide-sugar biosynthesis; UDP-N-acetyl-alpha-D-glucosamine biosynthesis; UDP-N-acetyl-alpha-D-glucosamine from N-acetyl-alpha-D-glucosamine 1-phosphate: step 1/1. The protein operates within bacterial outer membrane biogenesis; LPS lipid A biosynthesis. Catalyzes the last two sequential reactions in the de novo biosynthetic pathway for UDP-N-acetylglucosamine (UDP-GlcNAc). The C-terminal domain catalyzes the transfer of acetyl group from acetyl coenzyme A to glucosamine-1-phosphate (GlcN-1-P) to produce N-acetylglucosamine-1-phosphate (GlcNAc-1-P), which is converted into UDP-GlcNAc by the transfer of uridine 5-monophosphate (from uridine 5-triphosphate), a reaction catalyzed by the N-terminal domain. The polypeptide is Bifunctional protein GlmU (Histophilus somni (strain 2336) (Haemophilus somnus)).